The chain runs to 737 residues: Phosphoribosylformylglycinamidine synthase subunit PurL (737 aa).

His-50 is a catalytic residue. Positions 53 and 92 each coordinate ATP. Glu-94 contacts Mg(2+). Residues 95–98 (SHNH) and Arg-117 each bind substrate. The active-site Proton acceptor is the His-96. Asp-118 is a binding site for Mg(2+). Residue Gln-241 coordinates substrate. A Mg(2+)-binding site is contributed by Asp-269. 313-315 (ESQ) contacts substrate. Asp-495 and Gly-532 together coordinate ATP. Asn-533 contributes to the Mg(2+) binding site. Position 535 (Ser-535) interacts with substrate.

This sequence belongs to the FGAMS family. As to quaternary structure, monomer. Part of the FGAM synthase complex composed of 1 PurL, 1 PurQ and 2 PurS subunits.

The protein localises to the cytoplasm. It catalyses the reaction N(2)-formyl-N(1)-(5-phospho-beta-D-ribosyl)glycinamide + L-glutamine + ATP + H2O = 2-formamido-N(1)-(5-O-phospho-beta-D-ribosyl)acetamidine + L-glutamate + ADP + phosphate + H(+). It functions in the pathway purine metabolism; IMP biosynthesis via de novo pathway; 5-amino-1-(5-phospho-D-ribosyl)imidazole from N(2)-formyl-N(1)-(5-phospho-D-ribosyl)glycinamide: step 1/2. Its function is as follows. Part of the phosphoribosylformylglycinamidine synthase complex involved in the purines biosynthetic pathway. Catalyzes the ATP-dependent conversion of formylglycinamide ribonucleotide (FGAR) and glutamine to yield formylglycinamidine ribonucleotide (FGAM) and glutamate. The FGAM synthase complex is composed of three subunits. PurQ produces an ammonia molecule by converting glutamine to glutamate. PurL transfers the ammonia molecule to FGAR to form FGAM in an ATP-dependent manner. PurS interacts with PurQ and PurL and is thought to assist in the transfer of the ammonia molecule from PurQ to PurL. The protein is Phosphoribosylformylglycinamidine synthase subunit PurL of Bartonella bacilliformis (strain ATCC 35685 / KC583 / Herrer 020/F12,63).